Consider the following 209-residue polypeptide: Pyridoxine/pyridoxamine 5'-phosphate oxidase (209 aa).

Residues 57 to 62 (RMVLLK), 72 to 73 (YT), Lys-79, and Gln-101 contribute to the FMN site. Lys-62 contributes to the substrate binding site. The substrate site is built by Tyr-119, Arg-123, and Ser-127. FMN contacts are provided by residues 136–137 (QS) and Trp-181. Residue 187–189 (RLH) participates in substrate binding. Arg-191 contributes to the FMN binding site.

This sequence belongs to the pyridoxamine 5'-phosphate oxidase family. As to quaternary structure, homodimer. FMN is required as a cofactor.

The catalysed reaction is pyridoxamine 5'-phosphate + O2 + H2O = pyridoxal 5'-phosphate + H2O2 + NH4(+). It catalyses the reaction pyridoxine 5'-phosphate + O2 = pyridoxal 5'-phosphate + H2O2. It participates in cofactor metabolism; pyridoxal 5'-phosphate salvage; pyridoxal 5'-phosphate from pyridoxamine 5'-phosphate: step 1/1. It functions in the pathway cofactor metabolism; pyridoxal 5'-phosphate salvage; pyridoxal 5'-phosphate from pyridoxine 5'-phosphate: step 1/1. Functionally, catalyzes the oxidation of either pyridoxine 5'-phosphate (PNP) or pyridoxamine 5'-phosphate (PMP) into pyridoxal 5'-phosphate (PLP). The sequence is that of Pyridoxine/pyridoxamine 5'-phosphate oxidase from Chelativorans sp. (strain BNC1).